The following is a 763-amino-acid chain: Exo-1,4-beta-xylosidase bxlB (763 aa).

The N-terminal stretch at 1-23 (MAVFKSWNLALLSSLFIPALCQS) is a signal peptide. Residue Asn63 is glycosylated (N-linked (GlcNAc...) asparagine). Asp288 is an active-site residue. Asn340, Asn408, Asn419, Asn458, Asn621, and Asn760 each carry an N-linked (GlcNAc...) asparagine glycan.

This sequence belongs to the glycosyl hydrolase 3 family.

It localises to the secreted. It catalyses the reaction Hydrolysis of (1-&gt;4)-beta-D-xylans, to remove successive D-xylose residues from the non-reducing termini.. It functions in the pathway glycan degradation; xylan degradation. Functionally, xylan 1,4-beta-xylosidase involved in the hydrolysis of xylan, a major structural heterogeneous polysaccharide found in plant biomass representing the second most abundant polysaccharide in the biosphere, after cellulose. Active against rye arabinoxylan and xylohexaose, but not paranitrophenyl-beta-xyloside. This chain is Exo-1,4-beta-xylosidase bxlB (bxlB), found in Emericella nidulans (strain FGSC A4 / ATCC 38163 / CBS 112.46 / NRRL 194 / M139) (Aspergillus nidulans).